A 167-amino-acid chain; its full sequence is Homeobox protein EgHBX3 (167 aa).

The homeobox DNA-binding region spans 80–139; that stretch reads SQSKRRVLFNKFQISQLEKRLKQRYLTAQERQELAHTIGLTPTQVKIWFQNHAYKMKRLF.

This sequence belongs to the NK-2 homeobox family.

Its subcellular location is the nucleus. The sequence is that of Homeobox protein EgHBX3 (HBX3) from Echinococcus granulosus (Hydatid tapeworm).